We begin with the raw amino-acid sequence, 458 residues long: Phosphoglucosamine mutase (458 aa).

The active-site Phosphoserine intermediate is the S106. Residues S106, D247, D249, and D251 each contribute to the Mg(2+) site. Position 106 is a phosphoserine (S106).

It belongs to the phosphohexose mutase family. It depends on Mg(2+) as a cofactor. Activated by phosphorylation.

It carries out the reaction alpha-D-glucosamine 1-phosphate = D-glucosamine 6-phosphate. Catalyzes the conversion of glucosamine-6-phosphate to glucosamine-1-phosphate. In Chlamydia trachomatis serovar L2 (strain ATCC VR-902B / DSM 19102 / 434/Bu), this protein is Phosphoglucosamine mutase.